A 718-amino-acid polypeptide reads, in one-letter code: Methionine--tRNA ligase (718 aa).

Residues 27–37 (PYANGQIHIGH) carry the 'HIGH' region motif. Zn(2+) contacts are provided by C158, C161, C171, and C174. The 'KMSKS' region motif lies at 348-352 (KMSKS). K351 contributes to the ATP binding site. Residues 612–718 (DFAKIDLRIA…SGAKPGMRVK (107 aa)) enclose the tRNA-binding domain.

Belongs to the class-I aminoacyl-tRNA synthetase family. MetG type 1 subfamily. In terms of assembly, homodimer. Zn(2+) is required as a cofactor.

Its subcellular location is the cytoplasm. The enzyme catalyses tRNA(Met) + L-methionine + ATP = L-methionyl-tRNA(Met) + AMP + diphosphate. In terms of biological role, is required not only for elongation of protein synthesis but also for the initiation of all mRNA translation through initiator tRNA(fMet) aminoacylation. The protein is Methionine--tRNA ligase of Burkholderia thailandensis (strain ATCC 700388 / DSM 13276 / CCUG 48851 / CIP 106301 / E264).